A 373-amino-acid chain; its full sequence is Transaldolase (373 aa).

Residue lysine 143 is the Schiff-base intermediate with substrate of the active site.

Belongs to the transaldolase family. Type 2 subfamily.

It is found in the cytoplasm. The enzyme catalyses D-sedoheptulose 7-phosphate + D-glyceraldehyde 3-phosphate = D-erythrose 4-phosphate + beta-D-fructose 6-phosphate. It functions in the pathway carbohydrate degradation; pentose phosphate pathway; D-glyceraldehyde 3-phosphate and beta-D-fructose 6-phosphate from D-ribose 5-phosphate and D-xylulose 5-phosphate (non-oxidative stage): step 2/3. In terms of biological role, transaldolase is important for the balance of metabolites in the pentose-phosphate pathway. The polypeptide is Transaldolase (tal) (Mycobacterium tuberculosis (strain ATCC 25618 / H37Rv)).